Reading from the N-terminus, the 393-residue chain is S-adenosylmethionine synthase (393 aa).

H16 contacts ATP. D18 provides a ligand contact to Mg(2+). A K(+)-binding site is contributed by E44. The L-methionine site is built by E57 and Q100. The tract at residues 100–110 (QSNDIAQGVDH) is flexible loop. ATP is bound by residues 167–169 (DAK), 238–239 (RF), D247, 253–254 (RK), A270, and K274. D247 is an L-methionine binding site. Position 278 (K278) interacts with L-methionine.

Belongs to the AdoMet synthase family. Homotetramer; dimer of dimers. The cofactor is Mg(2+). It depends on K(+) as a cofactor.

The protein localises to the cytoplasm. It catalyses the reaction L-methionine + ATP + H2O = S-adenosyl-L-methionine + phosphate + diphosphate. It participates in amino-acid biosynthesis; S-adenosyl-L-methionine biosynthesis; S-adenosyl-L-methionine from L-methionine: step 1/1. Functionally, catalyzes the formation of S-adenosylmethionine (AdoMet) from methionine and ATP. The overall synthetic reaction is composed of two sequential steps, AdoMet formation and the subsequent tripolyphosphate hydrolysis which occurs prior to release of AdoMet from the enzyme. The sequence is that of S-adenosylmethionine synthase from Acidovorax ebreus (strain TPSY) (Diaphorobacter sp. (strain TPSY)).